Consider the following 342-residue polypeptide: Biotin synthase (342 aa).

Residues 63–290 (NTVQLSTLLS…GAMVRLSAGR (228 aa)) enclose the Radical SAM core domain. Residues C78, C82, and C85 each coordinate [4Fe-4S] cluster. Residues C122, C153, C213, and R285 each coordinate [2Fe-2S] cluster.

This sequence belongs to the radical SAM superfamily. Biotin synthase family. As to quaternary structure, homodimer. Requires [4Fe-4S] cluster as cofactor. The cofactor is [2Fe-2S] cluster.

The catalysed reaction is (4R,5S)-dethiobiotin + (sulfur carrier)-SH + 2 reduced [2Fe-2S]-[ferredoxin] + 2 S-adenosyl-L-methionine = (sulfur carrier)-H + biotin + 2 5'-deoxyadenosine + 2 L-methionine + 2 oxidized [2Fe-2S]-[ferredoxin]. It functions in the pathway cofactor biosynthesis; biotin biosynthesis; biotin from 7,8-diaminononanoate: step 2/2. In terms of biological role, catalyzes the conversion of dethiobiotin (DTB) to biotin by the insertion of a sulfur atom into dethiobiotin via a radical-based mechanism. The polypeptide is Biotin synthase (Cupriavidus pinatubonensis (strain JMP 134 / LMG 1197) (Cupriavidus necator (strain JMP 134))).